Reading from the N-terminus, the 494-residue chain is Guanosine-5'-triphosphate,3'-diphosphate pyrophosphatase (494 aa).

It belongs to the GppA/Ppx family. GppA subfamily.

The enzyme catalyses guanosine 3'-diphosphate 5'-triphosphate + H2O = guanosine 3',5'-bis(diphosphate) + phosphate + H(+). The protein operates within purine metabolism; ppGpp biosynthesis; ppGpp from GTP: step 2/2. Catalyzes the conversion of pppGpp to ppGpp. Guanosine pentaphosphate (pppGpp) is a cytoplasmic signaling molecule which together with ppGpp controls the 'stringent response', an adaptive process that allows bacteria to respond to amino acid starvation, resulting in the coordinated regulation of numerous cellular activities. In Shigella sonnei (strain Ss046), this protein is Guanosine-5'-triphosphate,3'-diphosphate pyrophosphatase.